The primary structure comprises 150 residues: UPF0756 membrane protein CGSHiEE_06715 (150 aa).

The next 4 membrane-spanning stretches (helical) occupy residues 1–21 (MTLQ…LGVL), 52–72 (YGVK…LVSG), 81–101 (GFVS…AWLA), and 123–143 (IIGV…AGIL).

It belongs to the UPF0756 family.

It localises to the cell membrane. This Haemophilus influenzae (strain PittEE) protein is UPF0756 membrane protein CGSHiEE_06715.